The primary structure comprises 235 residues: RAD9, HUS1, RAD1-interacting nuclear orphan protein 1 (235 aa).

S50 is subject to Phosphoserine. The short motif at 54 to 60 (SWVSPQF) is the RAD1-binding motif element. Disordered regions lie at residues 75-106 (HRDQ…SETL), 111-130 (RVQP…VPLF), and 149-198 (VFAP…LVKD). Residues 96 to 106 (ESPQSSSSETL) show a composition bias toward polar residues. Residues 123-130 (RRPLVPLF) carry the D-box motif. A compositionally biased stretch (basic and acidic residues) spans 161-173 (SVRDDPISPDQKE). Residues 171–175 (QKENS) carry the KEN box motif.

As to quaternary structure, interacts (when phosphorylated by PLK1) with POLQ; promoting POLQ recruitment to DNA damage sites. Interacts with RAD1; interaction is direct and promotes association with the 9-1-1 (RAD9-RAD1-HUS1) complex. Interacts with RAD18. Interacts with TOPBP1. Interacts with UBE2N. In terms of processing, phosphorylated at Ser-50 by PLK1, promoting interaction with polymerase theta (POLQ). Ubiquitinated and degraded by the APC/C complex upon mitotic exit.

The protein resides in the nucleus. It localises to the chromosome. Its function is as follows. Involved in microhomology-mediated end-joining (MMEJ) DNA repair by promoting recruitment of polymerase theta (POLQ) to DNA damage sites during mitosis. MMEJ is an alternative non-homologous end-joining (NHEJ) machinery that takes place during mitosis to repair double-strand breaks in DNA that originate in S-phase. Accumulates in M-phase; following phosphorylation by PLK1, interacts with POLQ, enabling its recruitment to double-strand breaks for subsequent repair. Also involved in the DNA damage response (DDR) signaling in response to genotoxic stresses such as ionizing radiation (IR) during the S phase. Recruited to sites of DNA damage through interaction with the 9-1-1 cell-cycle checkpoint response complex and TOPBP1 in a ATR-dependent manner. Required for the progression of the G1 to S phase transition. Plays a role in the stimulation of CHEK1 phosphorylation. The chain is RAD9, HUS1, RAD1-interacting nuclear orphan protein 1 (Rhno1) from Mus musculus (Mouse).